The primary structure comprises 205 residues: GTP cyclohydrolase-2 (205 aa).

Residue 49-53 (RIHSE) participates in GTP binding. Residues Cys-54, Cys-65, and Cys-67 each coordinate Zn(2+). GTP-binding positions include Gln-70, 92 to 94 (EGR), and Thr-114. Residue Asp-126 is the Proton acceptor of the active site. The active-site Nucleophile is Arg-128. Positions 149 and 154 each coordinate GTP.

It belongs to the GTP cyclohydrolase II family. It depends on Zn(2+) as a cofactor.

The enzyme catalyses GTP + 4 H2O = 2,5-diamino-6-hydroxy-4-(5-phosphoribosylamino)-pyrimidine + formate + 2 phosphate + 3 H(+). It functions in the pathway cofactor biosynthesis; riboflavin biosynthesis; 5-amino-6-(D-ribitylamino)uracil from GTP: step 1/4. Functionally, catalyzes the conversion of GTP to 2,5-diamino-6-ribosylamino-4(3H)-pyrimidinone 5'-phosphate (DARP), formate and pyrophosphate. This is GTP cyclohydrolase-2 from Shewanella woodyi (strain ATCC 51908 / MS32).